The following is a 1123-amino-acid chain: MGSLPLILLSLLLPGALANVYSCAGSVKSTSPVDYSQLKLQVRLLTLEGHMKHEEEVNPSNGYFMIPVYNKGHYTLKVSAPAGYYFEPDSIEIKIDGKTDACSLNEDLVFHLTGFSVRGTVDGAAAGLPLVLTENGKQIAETKTEDGGKYEMRAPPGKYEVSTGAGASECISKGKTSVEVKNAPVVVTPNFKISGYQLEVHTRTESMNPFVDAVMTLYATSSIDLPNIKCVGSEGSLNVPSTHNVKCSIGKTDPRGRLSVACVPSGEYYLAASHVNGPKSINFSPNPQKVVVSQAASEARFVAQSATGRVRVTSKDLPLSGVEVLVNEKSGGKTDSQGYLKIENLKEDEHTTITAKAPNTQFSTVHANVKFPKVEIQDVTVQKFDICGQVEKSENGVLGKLTFTRKDDKRSLEIQPKADGSFCQPVSPGLFTIEPTDKTSSLTPRLLEVEVLKNAVTNLRFTHFKTNANVHLSCIGACPTATVSLFLPGQTLVRSVKGTDVFTFENIGPGTYSARLDDNGRGCWEKSEMTLVVEQSNTQPTIHFKQNGFAAQIEISHPAEIEWSNADKKQLNGKTSTKGGEVISICVPTSGVYDVSLGSCYKFERQQFKLTVPFDGVHKEKAVAARISGTIDLENDKNAAVSIRIKSSAGDREIQVPALDNGRFTFEEPLASSGEQLVIVPSSKLRLFEPTSKSVTVTGKCIENAVKFNSFRGIFLDGSIKPAVEKAVVKAVLKKDKDVVIEAISNKDGAFKIGPVKRVEDYDITATLDGFKFTPTSTPGHFQSVKLSQLSIKVVDEVTNAPLDGVLLSLVGGKGAGSDYRSNNVLDETAHKNYVALAPGEYFVRAILQEYKFSPSTSTIVVKEGQHENVVLKGKRVSFSAYGKMREMSGDAMKDVIIEALSEGCDLHQSEATTKEDGTYRIRGLLPDCEYQVHAKSYADGSPAPHSFPRSFTVSMTAEDVKGLEFMATITAKTTDIAVEIGMDTLPEIQSVRVVITKNNNDHVQVASVVAPQHLHYLVNLPRDGVEYAIRVEAEKPPQAFAAKTVRVVADQAMKVARVPLTSSKRANDVDISVGTFLSLPFFVTLALVFFNQNRVLELLGTFIDWARNTFAPTADNHHRKRK.

The N-terminal stretch at 1–18 is a signal peptide; it reads MGSLPLILLSLLLPGALA. Residues 19 to 1071 are Lumenal-facing; the sequence is NVYSCAGSVK…TSSKRANDVD (1053 aa). The helical transmembrane segment at 1072–1092 threads the bilayer; sequence ISVGTFLSLPFFVTLALVFFN. Over 1093 to 1123 the chain is Cytoplasmic; that stretch reads QNRVLELLGTFIDWARNTFAPTADNHHRKRK.

May interact with nra-2 in the ER. Expressed in body wall, pharyngeal, uterine and vulval muscles, motor neurons, nerve ring, motor and ventral cord neurons, hypodermal cells in the tail, vulval epithelium and intestine.

The protein resides in the endoplasmic reticulum membrane. In terms of biological role, involved in the recognition and selection of protein complexes to exit the endoplasmic reticulum (ER). In muscles, regulates levamisole-sensitive nicotinic acetylcholine receptor (L-AChR) subunit composition, possibly by allowing only specific L-AChR subunit combinations to exit the ER. Specifically, may promote the inclusion of alpha subunit unc-38 into and the exclusion of unc-29 from L-AChR. Regulates L-AChR sensitivity to agonists such as nicotine and levamisole at neuro-muscular junctions. The sequence is that of Nicotinic receptor-associated protein 4 from Caenorhabditis elegans.